The following is a 59-amino-acid chain: Large ribosomal subunit protein bL32c (59 aa).

The interval 37-59 (SRSFSSGNEHPKPKGFSGQQTNK) is disordered.

Belongs to the bacterial ribosomal protein bL32 family.

It localises to the plastid. Its subcellular location is the chloroplast. The chain is Large ribosomal subunit protein bL32c from Hordeum vulgare (Barley).